Consider the following 231-residue polypeptide: Putative N-acetylmannosamine-6-phosphate 2-epimerase (231 aa).

It belongs to the NanE family.

The enzyme catalyses an N-acyl-D-glucosamine 6-phosphate = an N-acyl-D-mannosamine 6-phosphate. The protein operates within amino-sugar metabolism; N-acetylneuraminate degradation; D-fructose 6-phosphate from N-acetylneuraminate: step 3/5. Functionally, converts N-acetylmannosamine-6-phosphate (ManNAc-6-P) to N-acetylglucosamine-6-phosphate (GlcNAc-6-P). The protein is Putative N-acetylmannosamine-6-phosphate 2-epimerase of Listeria monocytogenes serotype 4b (strain F2365).